The chain runs to 334 residues: Holliday junction branch migration complex subunit RuvB (334 aa).

The large ATPase domain (RuvB-L) stretch occupies residues 1–181; it reads MHDRLISGTE…FGIVQRLEFY (181 aa). ATP-binding positions include Ile20, Arg21, Gly62, Lys65, Thr66, Thr67, 128-130, Arg171, Tyr181, and Arg218; that span reads EDY. Residue Thr66 participates in Mg(2+) binding. Residues 182–252 form a small ATPAse domain (RuvB-S) region; the sequence is SVEDLTHIVT…MAQRALDMLN (71 aa). The interval 255-334 is head domain (RuvB-H); sequence KDGLDTLDRR…FGLTPPEPKN (80 aa). 2 residues coordinate DNA: Arg310 and Arg315.

Belongs to the RuvB family. In terms of assembly, homohexamer. Forms an RuvA(8)-RuvB(12)-Holliday junction (HJ) complex. HJ DNA is sandwiched between 2 RuvA tetramers; dsDNA enters through RuvA and exits via RuvB. An RuvB hexamer assembles on each DNA strand where it exits the tetramer. Each RuvB hexamer is contacted by two RuvA subunits (via domain III) on 2 adjacent RuvB subunits; this complex drives branch migration. In the full resolvosome a probable DNA-RuvA(4)-RuvB(12)-RuvC(2) complex forms which resolves the HJ.

It is found in the cytoplasm. It carries out the reaction ATP + H2O = ADP + phosphate + H(+). Its function is as follows. The RuvA-RuvB-RuvC complex processes Holliday junction (HJ) DNA during genetic recombination and DNA repair, while the RuvA-RuvB complex plays an important role in the rescue of blocked DNA replication forks via replication fork reversal (RFR). RuvA specifically binds to HJ cruciform DNA, conferring on it an open structure. The RuvB hexamer acts as an ATP-dependent pump, pulling dsDNA into and through the RuvAB complex. RuvB forms 2 homohexamers on either side of HJ DNA bound by 1 or 2 RuvA tetramers; 4 subunits per hexamer contact DNA at a time. Coordinated motions by a converter formed by DNA-disengaged RuvB subunits stimulates ATP hydrolysis and nucleotide exchange. Immobilization of the converter enables RuvB to convert the ATP-contained energy into a lever motion, pulling 2 nucleotides of DNA out of the RuvA tetramer per ATP hydrolyzed, thus driving DNA branch migration. The RuvB motors rotate together with the DNA substrate, which together with the progressing nucleotide cycle form the mechanistic basis for DNA recombination by continuous HJ branch migration. Branch migration allows RuvC to scan DNA until it finds its consensus sequence, where it cleaves and resolves cruciform DNA. This is Holliday junction branch migration complex subunit RuvB from Acinetobacter baylyi (strain ATCC 33305 / BD413 / ADP1).